A 374-amino-acid polypeptide reads, in one-letter code: UPF0496 protein At4g34320 (374 aa).

2 helical membrane passes run 215–235 (IIFV…AAMA) and 238–258 (PVAA…GKWI).

It belongs to the UPF0496 family.

The protein localises to the membrane. The sequence is that of UPF0496 protein At4g34320 from Arabidopsis thaliana (Mouse-ear cress).